The following is a 123-amino-acid chain: Defensin beta 118 (123 aa).

A signal peptide spans 1–19; that stretch reads MKLLLLALPMLVLLPQVIP. 3 disulfide bridges follow: Cys27/Cys54, Cys34/Cys48, and Cys38/Cys55. A propeptide spanning residues 65–123 is cleaved from the precursor; that stretch reads VPATSPTPLSDSTPGIIDDILTVRFTTDYFEVSSKKDMVEESEAGRGTETSLPNVHHSS. The span at 100–110 shows a compositional bias: basic and acidic residues; it reads KDMVEESEAGR. The disordered stretch occupies residues 100–123; sequence KDMVEESEAGRGTETSLPNVHHSS. The span at 112–123 shows a compositional bias: polar residues; the sequence is TETSLPNVHHSS.

It belongs to the beta-defensin family. The three-dimensional structure formed by the three intramolecular disulfide bridges is indispensable for antimicrobial activity. High-level and epididymis-specific expression. Most abundant in the epithelium of the caput and present in the epididymis lumen and bound to sperm. Also expressed in pancreas.

Its subcellular location is the secreted. Host defense peptide that exhibits antimicrobial activity against both Gram-negative bacteria, such as E.coli and S.typhimurium, and Gram-positive bacteria, such as S.aureus and B.subtilis. Inhibits cell adhesion of E.coli on intestinal epithelial enterocytes. Causes rapid permeabilization of both the outer and inner membrane of E.coli, leading to morphological alterations on the bacterial surface. Binds to bacterial lipopolysaccharides (LPS) with high affinity, and may thereby be involved in immunoregulation through LPS neutralization. May contribute to epididymal innate immunity and protect the sperm against attack by microorganisms. In Homo sapiens (Human), this protein is Defensin beta 118 (DEFB118).